A 148-amino-acid chain; its full sequence is SsrA-binding protein (148 aa).

Belongs to the SmpB family.

The protein resides in the cytoplasm. Functionally, required for rescue of stalled ribosomes mediated by trans-translation. Binds to transfer-messenger RNA (tmRNA), required for stable association of tmRNA with ribosomes. tmRNA and SmpB together mimic tRNA shape, replacing the anticodon stem-loop with SmpB. tmRNA is encoded by the ssrA gene; the 2 termini fold to resemble tRNA(Ala) and it encodes a 'tag peptide', a short internal open reading frame. During trans-translation Ala-aminoacylated tmRNA acts like a tRNA, entering the A-site of stalled ribosomes, displacing the stalled mRNA. The ribosome then switches to translate the ORF on the tmRNA; the nascent peptide is terminated with the 'tag peptide' encoded by the tmRNA and targeted for degradation. The ribosome is freed to recommence translation, which seems to be the essential function of trans-translation. This is SsrA-binding protein from Ehrlichia ruminantium (strain Welgevonden).